We begin with the raw amino-acid sequence, 365 residues long: Transcription factor aptf-1 (365 aa).

Disordered stretches follow at residues 13 to 40 and 93 to 126; these read EFVR…PFYE and TPPQ…SNYS. Positions 223 to 356 are H-S-H (helix-span-helix), dimerization; it reads RRKQANVTAW…MIDESIKYID (134 aa).

Belongs to the AP-2 family. In terms of assembly, binds DNA as a dimer. In terms of tissue distribution, expressed in five interneurons AIB, RIB and RIS.

It is found in the nucleus. Functionally, transcription factor, which is required in the single sleep-active ring interneuron RIS for sleep-like behavioral quiescence induced by neuropeptide signaling in larvae. Regulates gene expression of sleep-inducing FMRFamide-like neuropeptide flp-11 in RIS. The protein is Transcription factor aptf-1 of Caenorhabditis elegans.